The primary structure comprises 186 residues: Imidazoleglycerol-phosphate dehydratase (186 aa).

The protein belongs to the imidazoleglycerol-phosphate dehydratase family.

The protein localises to the cytoplasm. The enzyme catalyses D-erythro-1-(imidazol-4-yl)glycerol 3-phosphate = 3-(imidazol-4-yl)-2-oxopropyl phosphate + H2O. Its pathway is amino-acid biosynthesis; L-histidine biosynthesis; L-histidine from 5-phospho-alpha-D-ribose 1-diphosphate: step 6/9. In Pyrobaculum aerophilum (strain ATCC 51768 / DSM 7523 / JCM 9630 / CIP 104966 / NBRC 100827 / IM2), this protein is Imidazoleglycerol-phosphate dehydratase.